A 662-amino-acid polypeptide reads, in one-letter code: UvrABC system protein B (662 aa).

A Helicase ATP-binding domain is found at 25–182 (KGIEKGEKFQ…KKLVEIQYER (158 aa)). 38–45 (GVTGSGKT) is a binding site for ATP. The Beta-hairpin motif lies at 91 to 114 (YYDYYQPEAYVAQSDTYIEKDASI). The 167-residue stretch at 429–595 (QIDDLYTSIQ…TIIKDIREVI (167 aa)) folds into the Helicase C-terminal domain. The UVR domain occupies 622-657 (DKLIEKYEEEMKEAAQNLQFEKAAHLRDVIYKLKRD).

It belongs to the UvrB family. In terms of assembly, forms a heterotetramer with UvrA during the search for lesions. Interacts with UvrC in an incision complex.

Its subcellular location is the cytoplasm. In terms of biological role, the UvrABC repair system catalyzes the recognition and processing of DNA lesions. A damage recognition complex composed of 2 UvrA and 2 UvrB subunits scans DNA for abnormalities. Upon binding of the UvrA(2)B(2) complex to a putative damaged site, the DNA wraps around one UvrB monomer. DNA wrap is dependent on ATP binding by UvrB and probably causes local melting of the DNA helix, facilitating insertion of UvrB beta-hairpin between the DNA strands. Then UvrB probes one DNA strand for the presence of a lesion. If a lesion is found the UvrA subunits dissociate and the UvrB-DNA preincision complex is formed. This complex is subsequently bound by UvrC and the second UvrB is released. If no lesion is found, the DNA wraps around the other UvrB subunit that will check the other stand for damage. The chain is UvrABC system protein B from Clostridium botulinum (strain Loch Maree / Type A3).